The sequence spans 1611 residues: Pentafunctional AROM polypeptide (1611 aa).

The interval 1–406 is 3-dehydroquinate synthase; that stretch reads MSQVSGGKVP…VEERASTVSD (406 aa). NAD(+) is bound by residues 64 to 66, 97 to 100, 128 to 130, and Asp133; these read DTN, EESK, and GGV. A 7-phospho-2-dehydro-3-deoxy-D-arabino-heptonate-binding site is contributed by Arg144. NAD(+) is bound at residue 153 to 154; sequence TT. 2 residues coordinate 7-phospho-2-dehydro-3-deoxy-D-arabino-heptonate: Asp160 and Lys166. Lys175 contacts NAD(+). Asn176 serves as a coordination point for 7-phospho-2-dehydro-3-deoxy-D-arabino-heptonate. NAD(+)-binding positions include 193-196 and Asn204; that span reads WLLT. Glu208 contributes to the Zn(2+) binding site. Residues 208–211 and Lys272 each bind 7-phospho-2-dehydro-3-deoxy-D-arabino-heptonate; that span reads EVIK. Glu282 serves as the catalytic Proton acceptor; for 3-dehydroquinate synthase activity. 7-phospho-2-dehydro-3-deoxy-D-arabino-heptonate contacts are provided by residues 286-290 and His293; that span reads RNLVN. A Zn(2+)-binding site is contributed by His293. Residue His297 is the Proton acceptor; for 3-dehydroquinate synthase activity of the active site. Residues His309 and Lys378 each contribute to the 7-phospho-2-dehydro-3-deoxy-D-arabino-heptonate site. His309 provides a ligand contact to Zn(2+). Positions 419–882 are EPSP synthase; that stretch reads VRESVSAPRP…WDVLGGPLNV (464 aa). Cys864 (for EPSP synthase activity) is an active-site residue. The segment at 915-1092 is shikimate kinase; it reads DASIVLIGMR…VPISPAFFLS (178 aa). 922–929 is an ATP binding site; that stretch reads GMRASGKS. The segment at 1093–1309 is 3-dehydroquinase; the sequence is LTFPRVQDAW…AAPGQMSVRD (217 aa). His1212 (proton acceptor; for 3-dehydroquinate dehydratase activity) is an active-site residue. Lys1240 serves as the catalytic Schiff-base intermediate with substrate; for 3-dehydroquinate dehydratase activity. Residues 1322–1611 form a shikimate dehydrogenase region; it reads KRHFFLFGSP…AAYRAAAASM (290 aa).

In the N-terminal section; belongs to the sugar phosphate cyclases superfamily. Dehydroquinate synthase family. It in the 2nd section; belongs to the EPSP synthase family. This sequence in the 3rd section; belongs to the shikimate kinase family. The protein in the 4th section; belongs to the type-I 3-dehydroquinase family. In the C-terminal section; belongs to the shikimate dehydrogenase family. Homodimer. It depends on Zn(2+) as a cofactor.

The protein resides in the cytoplasm. It carries out the reaction 7-phospho-2-dehydro-3-deoxy-D-arabino-heptonate = 3-dehydroquinate + phosphate. The catalysed reaction is 3-dehydroquinate = 3-dehydroshikimate + H2O. The enzyme catalyses shikimate + NADP(+) = 3-dehydroshikimate + NADPH + H(+). It catalyses the reaction shikimate + ATP = 3-phosphoshikimate + ADP + H(+). It carries out the reaction 3-phosphoshikimate + phosphoenolpyruvate = 5-O-(1-carboxyvinyl)-3-phosphoshikimate + phosphate. The protein operates within metabolic intermediate biosynthesis; chorismate biosynthesis; chorismate from D-erythrose 4-phosphate and phosphoenolpyruvate: step 2/7. It participates in metabolic intermediate biosynthesis; chorismate biosynthesis; chorismate from D-erythrose 4-phosphate and phosphoenolpyruvate: step 3/7. Its pathway is metabolic intermediate biosynthesis; chorismate biosynthesis; chorismate from D-erythrose 4-phosphate and phosphoenolpyruvate: step 4/7. It functions in the pathway metabolic intermediate biosynthesis; chorismate biosynthesis; chorismate from D-erythrose 4-phosphate and phosphoenolpyruvate: step 5/7. The protein operates within metabolic intermediate biosynthesis; chorismate biosynthesis; chorismate from D-erythrose 4-phosphate and phosphoenolpyruvate: step 6/7. Its function is as follows. The AROM polypeptide catalyzes 5 consecutive enzymatic reactions in prechorismate polyaromatic amino acid biosynthesis. The protein is Pentafunctional AROM polypeptide of Malassezia globosa (strain ATCC MYA-4612 / CBS 7966) (Dandruff-associated fungus).